The following is a 276-amino-acid chain: uncharacterized protein (276 aa).

This sequence to E.cuniculi ECU05_1600/ECU11_0130.

This is an uncharacterized protein from Encephalitozoon cuniculi (strain GB-M1) (Microsporidian parasite).